Here is a 141-residue protein sequence, read N- to C-terminus: MAKEIVGYLKLQVKGGEAKPAPPVGPALGSKGLNIMEFCKQFNARTQDKQGQILPVLITIYQDKTFDFVIKTPPAAASIMQKAGISKGSSESNRNKVGVITWSAIKEIAASKMEDLNTINLESATKMIAGTARSMGVTIKE.

Belongs to the universal ribosomal protein uL11 family. In terms of assembly, part of the ribosomal stalk of the 50S ribosomal subunit. Interacts with L10 and the large rRNA to form the base of the stalk. L10 forms an elongated spine to which L12 dimers bind in a sequential fashion forming a multimeric L10(L12)X complex. In terms of processing, one or more lysine residues are methylated.

Forms part of the ribosomal stalk which helps the ribosome interact with GTP-bound translation factors. In Amoebophilus asiaticus (strain 5a2), this protein is Large ribosomal subunit protein uL11.